We begin with the raw amino-acid sequence, 553 residues long: Dihydrolipoyllysine-residue acetyltransferase component of pyruvate dehydrogenase complex (553 aa).

The Lipoyl-binding 1 domain occupies 2–77 (AFSVQMPALG…EVGGELAVIG (76 aa)). Lysine 43 bears the N6-lipoyllysine mark. Residues 81–125 (DAGEAAAPAPEKVPAAQPESKPAPEPPPVQPTSGAPAGGDAKPVL) are disordered. Positions 84–100 (EAAAPAPEKVPAAQPES) are enriched in low complexity. Over residues 101–110 (KPAPEPPPVQ) the composition is skewed to pro residues. One can recognise a Lipoyl-binding 2 domain in the interval 121–196 (AKPVLMPELG…PVGGELARIG (76 aa)). An N6-lipoyllysine modification is found at lysine 162. Disordered regions lie at residues 204–238 (APAPKPAPKPVPEPAPTPKAEPAPSPPAAQPAGAA) and 278–321 (AAAE…TQKA). The span at 206–232 (APKPAPKPVPEPAPTPKAEPAPSPPAA) shows a compositional bias: pro residues. The Peripheral subunit-binding (PSBD) domain occupies 243–280 (YVTPLVRKLASENNIDLAGVTGTGVGGRIRKQDVLAAA). A compositionally biased stretch (low complexity) spans 288–300 (APAPAAQAAAAPA). Active-site residues include histidine 523 and aspartate 527.

Belongs to the 2-oxoacid dehydrogenase family. As to quaternary structure, forms a 24-polypeptide structural core with octahedral symmetry. Part of the PDH complex, consisting of multiple copies of AceE (E1), DlaT (E2) and Lpd (E3). (R)-lipoate serves as cofactor.

The enzyme catalyses N(6)-[(R)-dihydrolipoyl]-L-lysyl-[protein] + acetyl-CoA = N(6)-[(R)-S(8)-acetyldihydrolipoyl]-L-lysyl-[protein] + CoA. In terms of biological role, component of the pyruvate dehydrogenase (PDH) complex, that catalyzes the overall conversion of pyruvate to acetyl-CoA and CO(2). This chain is Dihydrolipoyllysine-residue acetyltransferase component of pyruvate dehydrogenase complex (dlaT), found in Mycobacterium bovis (strain ATCC BAA-935 / AF2122/97).